A 550-amino-acid chain; its full sequence is Chaperonin GroEL (550 aa).

ATP-binding positions include 30 to 33 (TLGP), lysine 51, 87 to 91 (DGTTT), glycine 415, and aspartate 496.

This sequence belongs to the chaperonin (HSP60) family. As to quaternary structure, forms a cylinder of 14 subunits composed of two heptameric rings stacked back-to-back. Interacts with the co-chaperonin GroES.

The protein localises to the cytoplasm. The enzyme catalyses ATP + H2O + a folded polypeptide = ADP + phosphate + an unfolded polypeptide.. Its function is as follows. Together with its co-chaperonin GroES, plays an essential role in assisting protein folding. The GroEL-GroES system forms a nano-cage that allows encapsulation of the non-native substrate proteins and provides a physical environment optimized to promote and accelerate protein folding. This chain is Chaperonin GroEL, found in Rickettsia bellii (strain OSU 85-389).